The chain runs to 426 residues: MLMKITEFDYRRISELVERARLDVDDVLGPVADIISMVRDGGDDALRELTGRFDGVTVENFRVSREEIEEAHKNLEPGVKEALREAASNIEEFHRMQMPSGWMSEVRPGVMAGQLVRPIDSVGCYIPGGRAVYPSTILMTVIPARIAGVERIVCCTPPAQDGSVPDAVLVAADMAGASEIYRVGGAQAVAAMAYGTETIRPVDKIVGPGNIFVTAAKKLVYGEVDIDFPAGPSEVLIIADETASPEYIALEILAQAEHDPQAASVLVTDSRDLALEVKEMVHENIKYMERANIIRESLERYGMIVLTADIDEAVDFSNAYAPEHLVIMTDSPEETLEGIRNAGSIFLGELSPVAAGDYGSGTNHVLPTSGCARMYSGLSTESFIKKPTVQRITKEGLRNLQGTVLKLAEYEGLHAHAESFRRRLRD.

Residues Tyr125, Gln187, and Asn210 each coordinate NAD(+). Ser233, Gln255, and His258 together coordinate substrate. Zn(2+) contacts are provided by Gln255 and His258. Catalysis depends on proton acceptor residues Glu323 and His324. The substrate site is built by His324, Asp357, Glu411, and His416. Asp357 contributes to the Zn(2+) binding site. Zn(2+) is bound at residue His416.

It belongs to the histidinol dehydrogenase family. It depends on Zn(2+) as a cofactor.

The catalysed reaction is L-histidinol + 2 NAD(+) + H2O = L-histidine + 2 NADH + 3 H(+). It participates in amino-acid biosynthesis; L-histidine biosynthesis; L-histidine from 5-phospho-alpha-D-ribose 1-diphosphate: step 9/9. Functionally, catalyzes the sequential NAD-dependent oxidations of L-histidinol to L-histidinaldehyde and then to L-histidine. The chain is Histidinol dehydrogenase (hisD) from Methanothermobacter thermautotrophicus (strain ATCC 29096 / DSM 1053 / JCM 10044 / NBRC 100330 / Delta H) (Methanobacterium thermoautotrophicum).